A 37-amino-acid polypeptide reads, in one-letter code: GIFSLVKGAAKLAGKGLAKEGGKFGLELIACKIAKQC.

Residues C31 and C37 are joined by a disulfide bond.

The protein belongs to the frog skin active peptide (FSAP) family. Esculentin subfamily. As to expression, expressed by the skin glands.

The protein resides in the secreted. Its function is as follows. Shows antibacterial activity against representative Gram-negative and Gram-positive bacterial species, and hemolytic activity. This chain is Esculentin-2B, found in Pelophylax lessonae (Pool frog).